The following is a 310-amino-acid chain: GPN-loop GTPase 2 (310 aa).

An N-acetylalanine modification is found at Ala2. 19-24 (GSGKTT) is a GTP binding site. The Gly-Pro-Asn (GPN)-loop; involved in dimer interface signature appears at 76–78 (GPN). Residue 178 to 181 (SKMD) participates in GTP binding.

This sequence belongs to the GPN-loop GTPase family. As to quaternary structure, heterodimers with GPN1 or GPN3. Binds to RNA polymerase II (RNAPII).

Functionally, small GTPase required for proper localization of RNA polymerase II and III (RNAPII and RNAPIII). May act at an RNAP assembly step prior to nuclear import. The polypeptide is GPN-loop GTPase 2 (Homo sapiens (Human)).